The sequence spans 401 residues: O-methyltransferase SAT18 (401 aa).

An S-adenosyl-L-methionine-binding site is contributed by D249. Residue H300 is the Proton acceptor of the active site.

Belongs to the class I-like SAM-binding methyltransferase superfamily. Cation-independent O-methyltransferase family.

It participates in mycotoxin biosynthesis. Its function is as follows. O-methyltransferase; part of the satratoxin SC3 cluster involved in the biosynthesis of satratoxins, trichothecene mycotoxins that are associated with human food poisonings. Satratoxins are suggested to be made by products of multiple gene clusters (SC1, SC2 and SC3) that encode 21 proteins in all, including polyketide synthases, acetyltransferases, and other enzymes expected to modify the trichothecene skeleton. SC1 encodes 10 proteins, SAT1 to SAT10. The largest are SAT8, which encodes a putative polyketide synthase (PKS) with a conventional non-reducing architecture, and SAT10, a putative protein containing four ankyrin repeats and thus may be involved in protein scaffolding. The putative short-chain reductase SAT3 may assist the PKS in some capacity. SAT6 contains a secretory lipase domain and acts probably as a trichothecene esterase. SAT5 encodes a putative acetyltransferase, and so, with SAT6, may affect endogenous protection from toxicity. The probable transcription factor SAT9 may regulate the expression of the SC1 cluster. SC2 encodes proteins SAT11 to SAT16, the largest of which encodes the putative reducing PKS SAT13. SAT11 is a cytochrome P450 monooxygenase, while SAT14 and SAT16 are probable acetyltransferases. The SC2 cluster may be regulated by the transcription factor SAT15. SC3 is a small cluster that encodes 5 proteins, SAT17 to SAT21. SAT21 is a putative MFS-type transporter which may have a role in exporting secondary metabolites. The four other proteins putatively encoded in SC3 include the taurine hydroxylase-like protein SAT17, the O-methyltransferase SAT18, the acetyltransferase SAT19, and the Cys6-type zinc finger SAT20, the latter being probably involved in regulation of SC3 expression. The chain is O-methyltransferase SAT18 from Stachybotrys chartarum (strain CBS 109288 / IBT 7711) (Toxic black mold).